Here is a 309-residue protein sequence, read N- to C-terminus: Ankyrin repeat and SOCS box protein 12 (309 aa).

ANK repeat units follow at residues 63–92 (VPGT…DVDS), 96–125 (KAQT…SPGG), 129–158 (NNCS…EANV), 171–200 (SCSG…DPDY), and 213–243 (RPRT…NIYL). Residues 268–308 (PRSLLSQVRLVVRRALCQAGQPQAINQLDIPPMLISYLKHQ) enclose the SOCS box domain.

The protein belongs to the ankyrin SOCS box (ASB) family. In terms of assembly, interacts with CUL5 and RNF7.

Its pathway is protein modification; protein ubiquitination. Its function is as follows. Probable substrate-recognition component of a SCF-like ECS (Elongin-Cullin-SOCS-box protein) E3 ubiquitin-protein ligase complex which mediates the ubiquitination and subsequent proteasomal degradation of target proteins. The polypeptide is Ankyrin repeat and SOCS box protein 12 (ASB12) (Homo sapiens (Human)).